A 155-amino-acid polypeptide reads, in one-letter code: Small ribosomal subunit protein uS7cz/uS7cy (155 aa).

Belongs to the universal ribosomal protein uS7 family. As to quaternary structure, part of the 30S ribosomal subunit.

The protein resides in the plastid. The protein localises to the chloroplast. One of the primary rRNA binding proteins, it binds directly to 16S rRNA where it nucleates assembly of the head domain of the 30S subunit. This chain is Small ribosomal subunit protein uS7cz/uS7cy (rps7-A), found in Lotus japonicus (Lotus corniculatus var. japonicus).